Consider the following 133-residue polypeptide: MQLFVRAQELHTLEVTGQETVAQIKDHVASLEGIAPEDQVVLLAGSPLEDEATLGQCGVEALTTLEVAGRMLGGKVHGSLARAGKVRGQTPKVAKQEKKKKKTGRAKRRMQYNRRFVNVVPTFGKKKGPNANS.

Residues 84 to 110 (GKVRGQTPKVAKQEKKKKKTGRAKRRM) form a disordered region. Over residues 97 to 110 (EKKKKKTGRAKRRM) the composition is skewed to basic residues. Position 125 is an N6-succinyllysine (Lys125).

This sequence in the N-terminal section; belongs to the ubiquitin family. In the C-terminal section; belongs to the eukaryotic ribosomal protein eS30 family. Component of the 40S subunit of the ribosome. FUBI is cleaved from ribosomal protein S30 by the deubiquitinase USP36 before the assembly of ribosomal protein S30 into pre-40S ribosomal particles. FUBI removal from ribosomal protein S30 is a crucial event for the final maturation of pre-40S particles.

Its subcellular location is the nucleus. The protein localises to the cytoplasm. In terms of biological role, may have pro-apoptotic activity. Component of the 40S subunit of the ribosome. Contributes to the assembly and function of 40S ribosomal subunits. The protein is Ubiquitin-like FUBI-ribosomal protein eS30 fusion protein (Fau) of Mus musculus (Mouse).